The following is a 369-amino-acid chain: Molybdenum import ATP-binding protein ModC (369 aa).

In terms of domain architecture, ABC transporter spans 3–246 (TRPEQASKDT…LDLPLAHGDS (244 aa)). 44-51 (GPSGSGKT) serves as a coordination point for ATP. A Mop domain is found at 305–369 (DTSILNILPA…AQIKGVAILG (65 aa)).

It belongs to the ABC transporter superfamily. Molybdate importer (TC 3.A.1.8) family. The complex is composed of two ATP-binding proteins (ModC), two transmembrane proteins (ModB) and a solute-binding protein (ModA).

It is found in the cell inner membrane. It carries out the reaction molybdate(out) + ATP + H2O = molybdate(in) + ADP + phosphate + H(+). In terms of biological role, part of the ABC transporter complex ModABC involved in molybdenum import. Responsible for energy coupling to the transport system. The chain is Molybdenum import ATP-binding protein ModC from Albidiferax ferrireducens (strain ATCC BAA-621 / DSM 15236 / T118) (Rhodoferax ferrireducens).